The primary structure comprises 356 residues: tRNA-specific 2-thiouridylase MnmA 2 (356 aa).

Residues 8 to 15 (GMSGGVDS) and Met34 contribute to the ATP site. Cys103 acts as the Nucleophile in catalysis. Cys103 and Cys199 form a disulfide bridge. Gly127 contacts ATP. Residues 149 to 151 (KDQ) are interaction with tRNA. Cys199 (cysteine persulfide intermediate) is an active-site residue. Residues 305–306 (RY) are interaction with tRNA.

The protein belongs to the MnmA/TRMU family.

Its subcellular location is the cytoplasm. It carries out the reaction S-sulfanyl-L-cysteinyl-[protein] + uridine(34) in tRNA + AH2 + ATP = 2-thiouridine(34) in tRNA + L-cysteinyl-[protein] + A + AMP + diphosphate + H(+). In terms of biological role, catalyzes the 2-thiolation of uridine at the wobble position (U34) of tRNA, leading to the formation of s(2)U34. The polypeptide is tRNA-specific 2-thiouridylase MnmA 2 (Clostridium botulinum (strain Okra / Type B1)).